Here is a 439-residue protein sequence, read N- to C-terminus: Structure-specific endonuclease subunit SLX1 homolog (439 aa).

Disordered regions lie at residues 1-28 and 117-140; these read METFILSSDSDDDCPPPPKRRSIEGVPK and DDDDDDEKESSTEHADDDLNLRAL. The segment covering 125–136 has biased composition (basic and acidic residues); the sequence is ESSTEHADDDLN. Residues 166–253 enclose the GIY-YIG domain; the sequence is EFYGVYCLIS…PAVSKSLKEK (88 aa). The SLX1-type zinc finger occupies 335–390; it reads CRLCGKDIEKLWGLVRCISQSCHSHFHSKCLAEHGLKNKNEYADQIYPLKSNCPIC.

This sequence belongs to the SLX1 family. In terms of assembly, forms a heterodimer with him-18/slx-4. The cofactor is a divalent metal cation.

The protein resides in the nucleus. Its function is as follows. Catalytic subunit of a heterodimeric structure-specific endonuclease that resolves DNA secondary structures generated during DNA repair and recombination. Has endonuclease activity towards branched DNA substrates, introducing single-strand cuts in duplex DNA close to junctions with ss-DNA (Potential). Has a preference for replication forks over 5' flap structures or Holliday junctions and shows much lower activity toward 3' flap structures. Required for proper crossover distribution through inhibition of crossover formation at the central region of chromosomes. The sequence is that of Structure-specific endonuclease subunit SLX1 homolog from Caenorhabditis briggsae.